The following is a 100-amino-acid chain: Small ribosomal subunit protein uS14c (100 aa).

It belongs to the universal ribosomal protein uS14 family. In terms of assembly, part of the 30S ribosomal subunit.

It is found in the plastid. It localises to the chloroplast. In terms of biological role, binds 16S rRNA, required for the assembly of 30S particles. In Chaetosphaeridium globosum (Charophycean green alga), this protein is Small ribosomal subunit protein uS14c.